A 598-amino-acid polypeptide reads, in one-letter code: Beta-fructofuranosidase, insoluble isoenzyme 2 (598 aa).

Residues 1-25 (MGVLGSRVAWAWLVQLLLLQQLAGA) form the signal peptide. The active site involves aspartate 69. Asparagine 164, asparagine 189, and asparagine 348 each carry an N-linked (GlcNAc...) asparagine glycan.

This sequence belongs to the glycosyl hydrolase 32 family. In terms of tissue distribution, expressed in leaves and flowers. Weakly expressed in seeds. Expressed in growing roots, node and the rapidly elongating zone of the internode.

Its subcellular location is the secreted. The protein resides in the cell wall. It carries out the reaction Hydrolysis of terminal non-reducing beta-D-fructofuranoside residues in beta-D-fructofuranosides.. Cell wall-associated invertase that cleaves sucrose into glucose and fructose and is required for assimilated carbon partitioning during early grain-filling. May be involved in sucrose unloaded in the ovular and stylar vascular tissues for the stimulation of starch synthesis in the developing endosperm during grain-filling. Sugar homeostasis mediated by CIN2/GIF1 plays an important role in constitutive and induced physical and chemical defense against pathogens. The protein is Beta-fructofuranosidase, insoluble isoenzyme 2 (CIN2) of Oryza sativa subsp. japonica (Rice).